We begin with the raw amino-acid sequence, 364 residues long: tRNA-specific 2-thiouridylase MnmA (364 aa).

ATP contacts are provided by residues 6–13 (AMSGGVDS) and Leu-32. Catalysis depends on Cys-101, which acts as the Nucleophile. Cysteines 101 and 193 form a disulfide. Residue Gly-125 coordinates ATP. Residues 143-145 (KDQ) are interaction with tRNA. The active-site Cysteine persulfide intermediate is the Cys-193.

This sequence belongs to the MnmA/TRMU family.

It localises to the cytoplasm. It catalyses the reaction S-sulfanyl-L-cysteinyl-[protein] + uridine(34) in tRNA + AH2 + ATP = 2-thiouridine(34) in tRNA + L-cysteinyl-[protein] + A + AMP + diphosphate + H(+). Functionally, catalyzes the 2-thiolation of uridine at the wobble position (U34) of tRNA, leading to the formation of s(2)U34. The polypeptide is tRNA-specific 2-thiouridylase MnmA (Rhodococcus jostii (strain RHA1)).